A 214-amino-acid polypeptide reads, in one-letter code: uncharacterized protein (214 aa).

A run of 4 helical transmembrane segments spans residues 10 to 30, 55 to 75, 147 to 167, and 174 to 194; these read IPPLAVYLLVSGVVGVESLGI, IGVGVVAVIGAAVGDSIGYAI, VSGAICWAGGTTALVYFAGMA, and RFSWIALIITVVVGIIAAILL.

It belongs to the DedA family.

The protein resides in the cell membrane. This is an uncharacterized protein from Mycobacterium leprae (strain TN).